Reading from the N-terminus, the 314-residue chain is Putative S-adenosyl-L-methionine-dependent methyltransferase MAP_0256 (314 aa).

S-adenosyl-L-methionine-binding positions include D132 and 161–162 (DL).

This sequence belongs to the UPF0677 family.

In terms of biological role, exhibits S-adenosyl-L-methionine-dependent methyltransferase activity. The polypeptide is Putative S-adenosyl-L-methionine-dependent methyltransferase MAP_0256 (Mycolicibacterium paratuberculosis (strain ATCC BAA-968 / K-10) (Mycobacterium paratuberculosis)).